The sequence spans 434 residues: Methylenetetrahydrofolate--tRNA-(uracil-5-)-methyltransferase TrmFO (434 aa).

An FAD-binding site is contributed by 10-15; the sequence is GAGLAG.

It belongs to the MnmG family. TrmFO subfamily. FAD is required as a cofactor.

The protein localises to the cytoplasm. The catalysed reaction is uridine(54) in tRNA + (6R)-5,10-methylene-5,6,7,8-tetrahydrofolate + NADH + H(+) = 5-methyluridine(54) in tRNA + (6S)-5,6,7,8-tetrahydrofolate + NAD(+). The enzyme catalyses uridine(54) in tRNA + (6R)-5,10-methylene-5,6,7,8-tetrahydrofolate + NADPH + H(+) = 5-methyluridine(54) in tRNA + (6S)-5,6,7,8-tetrahydrofolate + NADP(+). Catalyzes the folate-dependent formation of 5-methyl-uridine at position 54 (M-5-U54) in all tRNAs. This Bacillus cereus (strain Q1) protein is Methylenetetrahydrofolate--tRNA-(uracil-5-)-methyltransferase TrmFO.